The following is a 585-amino-acid chain: MYRLVSNVASKARIARKCTSQIGSRLNSTRNYAAKDIRFGVEARALMLRGVEDLADAVKVTMGPKGRNVIIEQSWGAPKVTKDGVTVAKSIEFKDRIKNVGASLVKQVANATNDVAGDGTTCATVLTRAIFTEGCKSVAAGMNAMDLRRGIKLAVDTVVTNLQSRARMISTSEEIAQVGTISANGDREIGELIAKAMETVGKEGVITIQDGKTLFNELEVVEGMKIDRGYISPYFITNPKTQKCELEDPLILIHEKKISNINAMVKVLELALKKQRPLLIVAEDVESDALATLILNKLRANIKVCAVKAPGFGENRKANLHDLAALTGAQVITEELGMNLDNIDLSMFGNCKKVTVSKDDTVVLDGAGDKQAIGERCEQIRSMVEASTSDYDKEKLQERLAKLSGGVAVLKIGGASETEVSEKKDRVTDALNATKAAVEEGIVPGGGVALLYASKELEKLSTANFDQKIGVQIIQNALKTPVYTIASNAGVEGAVVVGKLLEQDNPDLGYDAAKGEYVDMIKAGIIDPLKVIRTALVDAASVSSLLTTTEAVVTEIPTKEVASPGMGGGGMGGMGGMGGMGGMGF.

Residues 1 to 32 (MYRLVSNVASKARIARKCTSQIGSRLNSTRNY) constitute a mitochondrion transit peptide.

The protein belongs to the chaperonin (HSP60) family.

It localises to the mitochondrion. Implicated in mitochondrial protein import and macromolecular assembly. May facilitate the correct folding of imported proteins. May also prevent misfolding and promote the refolding and proper assembly of unfolded polypeptides generated under stress conditions in the mitochondrial matrix. The chain is Chaperonin CPN60-like 1, mitochondrial from Arabidopsis thaliana (Mouse-ear cress).